Consider the following 143-residue polypeptide: Large ribosomal subunit protein uL11 (143 aa).

Belongs to the universal ribosomal protein uL11 family. As to quaternary structure, part of the ribosomal stalk of the 50S ribosomal subunit. Interacts with L10 and the large rRNA to form the base of the stalk. L10 forms an elongated spine to which L12 dimers bind in a sequential fashion forming a multimeric L10(L12)X complex. One or more lysine residues are methylated.

Functionally, forms part of the ribosomal stalk which helps the ribosome interact with GTP-bound translation factors. This Verminephrobacter eiseniae (strain EF01-2) protein is Large ribosomal subunit protein uL11.